The sequence spans 214 residues: Protein-L-isoaspartate O-methyltransferase (214 aa).

Ser63 is a catalytic residue.

It belongs to the methyltransferase superfamily. L-isoaspartyl/D-aspartyl protein methyltransferase family.

It is found in the cytoplasm. The enzyme catalyses [protein]-L-isoaspartate + S-adenosyl-L-methionine = [protein]-L-isoaspartate alpha-methyl ester + S-adenosyl-L-homocysteine. In terms of biological role, catalyzes the methyl esterification of L-isoaspartyl residues in peptides and proteins that result from spontaneous decomposition of normal L-aspartyl and L-asparaginyl residues. It plays a role in the repair and/or degradation of damaged proteins. In Maridesulfovibrio salexigens (strain ATCC 14822 / DSM 2638 / NCIMB 8403 / VKM B-1763) (Desulfovibrio salexigens), this protein is Protein-L-isoaspartate O-methyltransferase.